The following is a 242-amino-acid chain: DNA repair protein RecO (242 aa).

This sequence belongs to the RecO family. Monomer.

In terms of biological role, involved in DNA repair and RecF pathway recombination. This Shigella boydii serotype 18 (strain CDC 3083-94 / BS512) protein is DNA repair protein RecO.